A 178-amino-acid polypeptide reads, in one-letter code: Protein 105R (178 aa).

An N-terminal signal peptide occupies residues 1–18 (MYFLFFFLLFLFPVGVKG).

This Pantherophis guttatus (Corn snake) protein is Protein 105R.